Here is a 247-residue protein sequence, read N- to C-terminus: Protein NipSnap homolog 3A (247 aa).

An N6-acetyllysine mark is found at Lys48 and Lys166.

The protein belongs to the NipSnap family. In terms of assembly, interacts with the Salmonella typhimurium virulence protein spiC. As to expression, ubiquitous. Highly expressed in liver, kidney and muscle. Expressed at intermediate level in brain, heart, colon, thymus, kidney, small intestine, placenta, lung, leukocytes and spleen.

Its subcellular location is the cytoplasm. The protein resides in the cytosol. In Homo sapiens (Human), this protein is Protein NipSnap homolog 3A (NIPSNAP3A).